The sequence spans 428 residues: Monocarboxylate transporter 13 (428 aa).

The Cytoplasmic segment spans residues 1–10 (MVHRTEPPDG). 12 helical membrane-spanning segments follow: residues 11 to 31 (GWGW…FGVL), 52 to 72 (VSWI…IGSA), 81 to 101 (PVVM…SFAT), 106 to 126 (LYLS…TPTL), 139 to 159 (LAMG…APLF), 172 to 192 (LLLV…LRPL), 221 to 241 (VALT…VAHL), 244 to 264 (LGWD…SDLV), 283 to 303 (LLML…VAQA), 309 to 329 (VLAV…FSVI), 338 to 358 (IYCG…LGAP), and 374 to 394 (FVVA…LPHF). Over 395–428 (FSCISLSTSRPQDLVIEAPDTKIPLPKEEGLGEN) the chain is Cytoplasmic.

Belongs to the major facilitator superfamily. Monocarboxylate porter (TC 2.A.1.13) family.

The protein resides in the golgi apparatus membrane. The protein localises to the cell membrane. In terms of biological role, proton-linked monocarboxylate transporter. May catalyze the transport of monocarboxylates across the plasma membrane. This is Monocarboxylate transporter 13 (Slc16a13) from Rattus norvegicus (Rat).